The following is a 336-amino-acid chain: Eukaryotic translation initiation factor 3 subunit H (336 aa).

One can recognise an MPN domain in the interval 21–154; it reads VQCDGLAAMK…LKAYRLTPQA (134 aa).

The protein belongs to the eIF-3 subunit H family. In terms of assembly, component of the eukaryotic translation initiation factor 3 (eIF-3) complex.

The protein resides in the cytoplasm. Functionally, component of the eukaryotic translation initiation factor 3 (eIF-3) complex, which is involved in protein synthesis of a specialized repertoire of mRNAs and, together with other initiation factors, stimulates binding of mRNA and methionyl-tRNAi to the 40S ribosome. The eIF-3 complex specifically targets and initiates translation of a subset of mRNAs involved in cell proliferation. The sequence is that of Eukaryotic translation initiation factor 3 subunit H from Culex quinquefasciatus (Southern house mosquito).